A 231-amino-acid polypeptide reads, in one-letter code: NADH-ubiquinone oxidoreductase chain 4 (231 aa).

6 helical membrane passes run 1–21 (PIAG…YGII), 34–54 (LFIP…LTCL), 61–80 (SLIA…AITI), 84–106 (WGLS…LFCL), 118–138 (VLIL…WWLL), and 156–178 (LLIM…LSML).

It belongs to the complex I subunit 4 family.

The protein resides in the mitochondrion membrane. It carries out the reaction a ubiquinone + NADH + 5 H(+)(in) = a ubiquinol + NAD(+) + 4 H(+)(out). In terms of biological role, core subunit of the mitochondrial membrane respiratory chain NADH dehydrogenase (Complex I) that is believed to belong to the minimal assembly required for catalysis. Complex I functions in the transfer of electrons from NADH to the respiratory chain. The immediate electron acceptor for the enzyme is believed to be ubiquinone. The sequence is that of NADH-ubiquinone oxidoreductase chain 4 (MT-ND4) from Azemiops feae (Fea's viper).